Reading from the N-terminus, the 182-residue chain is 5-formyltetrahydrofolate cyclo-ligase (182 aa).

The disordered stretch occupies residues 1-21; sequence MIRQRRRALTPEQQQEMGQQA. Positions 11 to 21 are enriched in polar residues; that stretch reads PEQQQEMGQQA. ATP-binding positions include 128–135 and Asp-167; that span reads GMGGGFYD.

Belongs to the 5-formyltetrahydrofolate cyclo-ligase family.

The enzyme catalyses (6S)-5-formyl-5,6,7,8-tetrahydrofolate + ATP = (6R)-5,10-methenyltetrahydrofolate + ADP + phosphate. It participates in one-carbon metabolism; tetrahydrofolate interconversion. Its function is as follows. Involved in the removal of 5-formyltetrahydrofolate. In vitro, it is a potent inhibitor of various folate-dependent enzymes in the C1 metabolism network and in vivo it might function as a folate storage. 5-formyltetrahydrofolate is also used as an antifolate rescue agent in cancer chemotherapy. Catalyzes the irreversible ATP-dependent transformation of 5-formyltetrahydrofolate (5-CHO-THF) to form 5,10-methenyltetrahydrofolate (5,10-CH=THF). The reverse reaction is catalyzed by the serine hydroxymethyltransferase GlyA (SHMT). The protein is 5-formyltetrahydrofolate cyclo-ligase (ygfA) of Escherichia coli O157:H7.